We begin with the raw amino-acid sequence, 101 residues long: MDPQNSFLLQPRVPTAAPTSGGVSWSRVGEVAILSFVGLICFYLLYLWVLRDLILVLKARQGRSTEELIFGIQAVDRSNPIPNTQAPPSQGNPGPFVPGTG.

Residues 1 to 22 (MDPQNSFLLQPRVPTAAPTSGG) are disordered. The helical transmembrane segment at 30–50 (EVAILSFVGLICFYLLYLWVL) threads the bilayer. Residues 79-101 (NPIPNTQAPPSQGNPGPFVPGTG) are disordered. Residues 80 to 92 (PIPNTQAPPSQGN) show a composition bias toward polar residues.

This sequence belongs to the mastrevirus movement protein family. In terms of assembly, interacts with the capsid protein (CP). Part of a MP-CP-viral DNA complex.

The protein localises to the host membrane. Involved in the viral transport within, and between cells. The polypeptide is Movement protein (Avena sativa (Oat)).